A 419-amino-acid polypeptide reads, in one-letter code: MSQLVDRRLSGKNRSAVNRQRFLRRFKAQIRKAAAQAVSGRKVADLERGEKISIPSKDLSEPIFHHGPGGRRNVILPGNREFVSGDRIDRPAGEGGGGSGGSPDGEGMDDFVFELSKEEFMDYFFEDLALPDMVKKQLAAVPEVKKSRAGFVSHGNPANLHVVRSMKQAIGRRLAMAAGPREALRQAEEALEALVAEGRGAEPDAEALREEIAALKARVAAVPFIDTWDLRYAHRVDQPVPSSQAVMFCLLDVSGSMDEDRKNIAKRFFMLLYLFLTKSYERIDVVFIRHHTVAKEVDEEEFFSSRESGGTVVSSALELMRDIILARYPTSNWNIYAAQASDGDNWDDDSPRCRDLLLQSILPLTQYFAYVEIEAEEPQSLWREYERVKAASPRFAMQRILALEDIYPVFRELFRKKAA.

The tract at residues 85 to 108 is disordered; it reads GDRIDRPAGEGGGGSGGSPDGEGM. Residues 93 to 104 show a composition bias toward gly residues; sequence GEGGGGSGGSPD.

This sequence belongs to the UPF0229 family.

This Thiobacillus denitrificans (strain ATCC 25259 / T1) protein is UPF0229 protein Tbd_1233.